Consider the following 419-residue polypeptide: L-rhamnose isomerase (419 aa).

His262, Asp294, and Asp296 together coordinate Mn(2+).

The protein belongs to the rhamnose isomerase family. As to quaternary structure, homotetramer. Mn(2+) serves as cofactor.

Its subcellular location is the cytoplasm. The catalysed reaction is L-rhamnopyranose = L-rhamnulose. The protein operates within carbohydrate degradation; L-rhamnose degradation; glycerone phosphate from L-rhamnose: step 1/3. In terms of biological role, catalyzes the interconversion of L-rhamnose and L-rhamnulose. The sequence is that of L-rhamnose isomerase from Shigella flexneri serotype 5b (strain 8401).